A 335-amino-acid chain; its full sequence is Beta-ketoacyl-[acyl-carrier-protein] synthase III (335 aa).

Active-site residues include cysteine 116 and histidine 256. The segment at 257 to 261 (QANLR) is ACP-binding. Asparagine 286 is a catalytic residue.

Belongs to the thiolase-like superfamily. FabH family. As to quaternary structure, homodimer.

Its subcellular location is the cytoplasm. It catalyses the reaction malonyl-[ACP] + acetyl-CoA + H(+) = 3-oxobutanoyl-[ACP] + CO2 + CoA. The protein operates within lipid metabolism; fatty acid biosynthesis. Functionally, catalyzes the condensation reaction of fatty acid synthesis by the addition to an acyl acceptor of two carbons from malonyl-ACP. Catalyzes the first condensation reaction which initiates fatty acid synthesis and may therefore play a role in governing the total rate of fatty acid production. Possesses both acetoacetyl-ACP synthase and acetyl transacylase activities. Its substrate specificity determines the biosynthesis of branched-chain and/or straight-chain of fatty acids. This is Beta-ketoacyl-[acyl-carrier-protein] synthase III from Porphyromonas gingivalis (strain ATCC BAA-308 / W83).